The sequence spans 236 residues: Putative (5-formylfuran-3-yl)methyl phosphate synthase (236 aa).

The Schiff-base intermediate with substrate role is filled by Lys-38. Residue Lys-94 is the Proton acceptor of the active site.

Belongs to the MfnB family.

It carries out the reaction 2 D-glyceraldehyde 3-phosphate = 4-(hydroxymethyl)-2-furancarboxaldehyde phosphate + phosphate + 2 H2O. In terms of biological role, catalyzes the formation of 4-(hydroxymethyl)-2-furancarboxaldehyde phosphate (4-HFC-P) from two molecules of glyceraldehyde-3-P (GA-3-P). In Methylorubrum extorquens (Methylobacterium dichloromethanicum), this protein is Putative (5-formylfuran-3-yl)methyl phosphate synthase.